The chain runs to 110 residues: uncharacterized protein (110 aa).

The chain crosses the membrane as a helical span at residues 18–34 (MFPLISTFTSIGLGVLM).

Its subcellular location is the membrane. This is an uncharacterized protein from Saccharomyces cerevisiae (strain ATCC 204508 / S288c) (Baker's yeast).